The sequence spans 122 residues: uncharacterized protein (122 aa).

This is an uncharacterized protein from Mycoplasma pneumoniae (strain ATCC 29342 / M129 / Subtype 1) (Mycoplasmoides pneumoniae).